The primary structure comprises 629 residues: 1-deoxy-D-xylulose-5-phosphate synthase (629 aa).

Residues histidine 78 and 119-121 (AHS) each bind thiamine diphosphate. Aspartate 150 contacts Mg(2+). Thiamine diphosphate is bound by residues 151–152 (GA), asparagine 179, tyrosine 286, and glutamate 368. Asparagine 179 is a binding site for Mg(2+).

The protein belongs to the transketolase family. DXPS subfamily. Homodimer. Mg(2+) serves as cofactor. The cofactor is thiamine diphosphate.

It catalyses the reaction D-glyceraldehyde 3-phosphate + pyruvate + H(+) = 1-deoxy-D-xylulose 5-phosphate + CO2. It participates in metabolic intermediate biosynthesis; 1-deoxy-D-xylulose 5-phosphate biosynthesis; 1-deoxy-D-xylulose 5-phosphate from D-glyceraldehyde 3-phosphate and pyruvate: step 1/1. Functionally, catalyzes the acyloin condensation reaction between C atoms 2 and 3 of pyruvate and glyceraldehyde 3-phosphate to yield 1-deoxy-D-xylulose-5-phosphate (DXP). The sequence is that of 1-deoxy-D-xylulose-5-phosphate synthase from Acidovorax sp. (strain JS42).